The sequence spans 270 residues: uncharacterized protein (270 aa).

A signal peptide spans 1 to 22 (MEYIKKIALYMSVLLLIIFIGG). Cys23 carries the N-palmitoyl cysteine lipid modification. A lipid anchor (S-diacylglycerol cysteine) is attached at Cys23.

Belongs to the staphylococcal tandem lipoprotein family.

It localises to the cell membrane. This is an uncharacterized protein from Staphylococcus aureus (strain USA300).